Consider the following 417-residue polypeptide: Serine--tRNA ligase (417 aa).

226-228 (TSE) contacts L-serine. Residues 257 to 259 (RRE) and Val-273 contribute to the ATP site. Glu-280 lines the L-serine pocket. Position 344-347 (344-347 (EVTS)) interacts with ATP. Residue Thr-379 participates in L-serine binding.

It belongs to the class-II aminoacyl-tRNA synthetase family. Type-1 seryl-tRNA synthetase subfamily. In terms of assembly, homodimer. The tRNA molecule binds across the dimer.

The protein resides in the cytoplasm. It catalyses the reaction tRNA(Ser) + L-serine + ATP = L-seryl-tRNA(Ser) + AMP + diphosphate + H(+). The catalysed reaction is tRNA(Sec) + L-serine + ATP = L-seryl-tRNA(Sec) + AMP + diphosphate + H(+). The protein operates within aminoacyl-tRNA biosynthesis; selenocysteinyl-tRNA(Sec) biosynthesis; L-seryl-tRNA(Sec) from L-serine and tRNA(Sec): step 1/1. Its function is as follows. Catalyzes the attachment of serine to tRNA(Ser). Is also able to aminoacylate tRNA(Sec) with serine, to form the misacylated tRNA L-seryl-tRNA(Sec), which will be further converted into selenocysteinyl-tRNA(Sec). This chain is Serine--tRNA ligase, found in Tropheryma whipplei (strain TW08/27) (Whipple's bacillus).